The sequence spans 1234 residues: Protein Jumonji (1234 aa).

Residues 1–11 are compositionally biased toward basic residues; the sequence is MSKERPKRNII. 4 disordered regions span residues 1–22, 68–150, 169–339, and 354–548; these read MSKERPKRNIIQKKYDDSDGIP, AKAL…LSKR, LPNS…VKYT, and RELV…GKSG. A Phosphoserine modification is found at serine 78. The span at 86 to 98 shows a compositional bias: low complexity; it reads SQVSSTSNDVSSS. A Nuclear localization signal motif is present at residues 104 to 110; the sequence is PSRKRPR. Residues 117 to 129 are compositionally biased toward polar residues; that stretch reads FAQSQPNSPSTTP. Positions 141-170 are sufficient for interaction with the PRC2 complex; sequence ATQISDLSKRKPKTEDFLTFLCLRGSPALP. Acidic residues predominate over residues 180-193; sequence QDEEDVEEEDDETE. A compositionally biased stretch (polar residues) spans 197-210; that stretch reads ATTNNASSSCQSTP. The segment covering 211–221 has biased composition (basic residues); sequence RKGKTHKHVHN. The span at 244-264 shows a compositional bias: basic and acidic residues; sequence KEATPGKEKHSEPRADSRREQ. Over residues 265–285 the composition is skewed to low complexity; sequence ASGAQPTAASAAASSAKGLAA. 2 stretches are compositionally biased toward polar residues: residues 304 to 322 and 369 to 384; these read SKVNGVTRMSSLGAGTNSA and SAVNHTISGKTESSNA. The residue at position 378 (lysine 378) is an N6-acetyllysine. Residues 418-440 are compositionally biased toward basic and acidic residues; that stretch reads CTKEVGGRQLREGLRNSKRRLEE. Position 449 is a phosphoserine (serine 449). Composition is skewed to basic and acidic residues over residues 482 to 494 and 529 to 544; these read VKKEVPERSLERN and SSHKPHDPQGKPEKGS. Positions 555–596 constitute a JmjN domain; it reads IPVLRPSAKEFHDPLIYIESVRAQVEKYGMCRVIPPPDWRPE. One can recognise an ARID domain in the interval 619-711; that stretch reads WGPNVQRLAC…YLLSYDSLSP (93 aa). The short motif at 872–876 is the GSGFP motif element; sequence GSGFP. A JmjC domain is found at 882–1046; sequence PFSRHGWNLT…MGFETAKEMK (165 aa). The interval 1206–1234 is disordered; that stretch reads ENCLNKPTPKRGPRKRATVDVPPSRLPSS.

Belongs to the JARID2 family. Associates with the PRC2 complex, which consists of the core components EED, EZH1 or EZH2, SUZ12, and RBBP4, and various combinations of accessory subunits including AEBP2, JARID2, PHF19, MTF2 and EPOP. Found in a monomeric PRC2.2 (class 2) complex consisting of at least SUZ12, RBBP4, AEBP2 and JARID2. Facilitates nucleosome binding of the PRC2 complex. Interacts with SUZ12 (via C2H2-type zinc finger domain); the interaction is direct; competes with EPOP for SUZ12 binding. Interacts with histone methyltransferases EHMT1/GLP1 and EHMT2/G9a. Interacts with GATA4 (via the N-terminal region). Interacts with NKX2-5 (via the C-terminal region). Interacts with RB1. Interacts with ZNF496. Interacts with ESRRB. Interacts with DDX18; this interaction inhibits the PRC2 complex. In terms of tissue distribution, widely expressed in embryos. In adults, expressed at high levels in heart, skeletal muscle, brain and thymus.

It is found in the nucleus. In terms of biological role, regulator of histone methyltransferase complexes that plays an essential role in embryonic development, including heart and liver development, neural tube fusion process and hematopoiesis. Acts as an accessory subunit for the core PRC2 (Polycomb repressive complex 2) complex, which mediates histone H3K27 (H3K27me3) trimethylation on chromatin. Binds DNA and mediates the recruitment of the PRC2 complex to target genes in embryonic stem cells, thereby playing a key role in stem cell differentiation and normal embryonic development. In cardiac cells, it is required to repress expression of cyclin-D1 (CCND1) by activating methylation of 'Lys-9' of histone H3 (H3K9me) by the GLP1/EHMT1 and G9a/EHMT2 histone methyltransferases. Also acts as a transcriptional repressor of ANF via its interaction with GATA4 and NKX2-5. Participates in the negative regulation of cell proliferation signaling. Does not have histone demethylase activity. This Mus musculus (Mouse) protein is Protein Jumonji (Jarid2).